We begin with the raw amino-acid sequence, 341 residues long: L-threonine 3-dehydrogenase (341 aa).

Cys38 contacts Zn(2+). Catalysis depends on charge relay system residues Thr40 and His43. His63, Glu64, Cys93, Cys96, Cys99, and Cys107 together coordinate Zn(2+). NAD(+) is bound by residues Ile175, Asp195, Arg200, 262–264, and 286–287; these read LGI and IY.

It belongs to the zinc-containing alcohol dehydrogenase family. In terms of assembly, homotetramer. The cofactor is Zn(2+).

The protein localises to the cytoplasm. It catalyses the reaction L-threonine + NAD(+) = (2S)-2-amino-3-oxobutanoate + NADH + H(+). It functions in the pathway amino-acid degradation; L-threonine degradation via oxydo-reductase pathway; glycine from L-threonine: step 1/2. Its function is as follows. Catalyzes the NAD(+)-dependent oxidation of L-threonine to 2-amino-3-ketobutyrate. The chain is L-threonine 3-dehydrogenase from Alteromonas mediterranea (strain DSM 17117 / CIP 110805 / LMG 28347 / Deep ecotype).